Reading from the N-terminus, the 234-residue chain is MEKKDMLYEGKAKKIFGTDDKDTVVVYYKDDATAFNGEKKGTIEDKGVMNNSITSMLFELLEKKGVKTHFIEKINEREQLCKKVEIVPLEVIVRNIAAGSMAKRLGLSEGRKLDTTVFEISYKNDDLNDPLINDYHAVAIGLTTFEELKEMYSIAEKVNNTLKEFFDKQGIILVDFKIEIGRSRGGLLLADEISPDTCRLWDKKTGEKLDKDRFRRDMGNVKEAYMEILKRVNK.

The protein belongs to the SAICAR synthetase family.

It catalyses the reaction 5-amino-1-(5-phospho-D-ribosyl)imidazole-4-carboxylate + L-aspartate + ATP = (2S)-2-[5-amino-1-(5-phospho-beta-D-ribosyl)imidazole-4-carboxamido]succinate + ADP + phosphate + 2 H(+). It functions in the pathway purine metabolism; IMP biosynthesis via de novo pathway; 5-amino-1-(5-phospho-D-ribosyl)imidazole-4-carboxamide from 5-amino-1-(5-phospho-D-ribosyl)imidazole-4-carboxylate: step 1/2. This chain is Phosphoribosylaminoimidazole-succinocarboxamide synthase, found in Clostridium botulinum (strain Loch Maree / Type A3).